The following is a 98-amino-acid chain: MPSIFINIILAFATALLGTLVFRSHLMSSLLCLEGMMLSMFILSTLIILNMHFTMSFMMPILLLVFAACEAAVGLALLVMVSNTYGLDYIQNLNLLQC.

3 consecutive transmembrane segments (helical) span residues 2–22, 29–49, and 61–81; these read PSIF…TLVF, SLLC…LIIL, and ILLL…LVMV.

It belongs to the complex I subunit 4L family. In terms of assembly, core subunit of respiratory chain NADH dehydrogenase (Complex I) which is composed of 45 different subunits.

It localises to the mitochondrion inner membrane. The catalysed reaction is a ubiquinone + NADH + 5 H(+)(in) = a ubiquinol + NAD(+) + 4 H(+)(out). Core subunit of the mitochondrial membrane respiratory chain NADH dehydrogenase (Complex I) which catalyzes electron transfer from NADH through the respiratory chain, using ubiquinone as an electron acceptor. Part of the enzyme membrane arm which is embedded in the lipid bilayer and involved in proton translocation. This Propithecus tattersalli (Golden-crowned Sifaka) protein is NADH-ubiquinone oxidoreductase chain 4L (MT-ND4L).